We begin with the raw amino-acid sequence, 628 residues long: MGDLPGSTGGGSGPAAAGNASGNASSAGNTGLGVAGTTGVDRPPSPARLSHTSEKHPKVTLTELNMLRRHRELCDVVLNVGGRKIFAHRVILSACSSYFCAMFTGELEESRQTEVTIRDIDENAMELLIDFCYTAHIIVEESNVQTLLPAACLLQLVEIQDICCEFLKRQLDPTNCLGIRAFADTHSCRELLRIADKFTQHNFQEVMESEEFLLLPVGQLVDIICSDELNVRSEEQVFNAVMSWLKYNVAERRQHLAQVLQHVRLPLLSPKFLVGTVGSDLLVRSDEACRDLVDEAKNYLLLPQERPLMQGPRTRPRKPTRRGEVLFAVGGWCSGDAIASVERFDPQTNDWKMVAPMSKRRCGVGVAVLNDLLYAVGGHDGQSYLNSIERYDPQTNQWSCDVAPTTSCRTSVGVAVLDGFLYAVGGQDGVQCLNHVERYDPKENKWSKVAPMTTRRLGVAVAVLGGFLYAIGGSDGQCPLNTVERYDPRQNKWVAVSPMSTRRKHLGCAVFNNYIYAVGGRDDCMELSSAERYNPLTNTWSPIVAMTSRRSGVGLAVVNGQLYAVGGFDGSAYLKTIEVYDPETNQWRLCGCMNYRRLGGGVGVMRAPQTENYMWCENSLKQHNNPPS.

The interval 1-56 (MGDLPGSTGGGSGPAAAGNASGNASSAGNTGLGVAGTTGVDRPPSPARLSHTSEKH) is disordered. The segment covering 14–29 (PAAAGNASGNASSAGN) has biased composition (low complexity). A BTB domain is found at 74–141 (CDVVLNVGGR…CYTAHIIVEE (68 aa)). The 103-residue stretch at 176 to 278 (CLGIRAFADT…SPKFLVGTVG (103 aa)) folds into the BACK domain. Kelch repeat units lie at residues 325–371 (VLFA…VLND), 373–419 (LYAV…VLDG), 420–466 (FLYA…VLGG), 468–513 (LYAI…VFNN), 515–560 (IYAV…VVNG), and 561–607 (QLYA…VMRA).

It functions in the pathway protein modification; protein ubiquitination. In terms of biological role, probable substrate-specific adapter of an E3 ubiquitin-protein ligase complex which mediates the ubiquitination and subsequent proteasomal degradation of target proteins. May have a role in synapse differentiation and growth. In Drosophila pseudoobscura pseudoobscura (Fruit fly), this protein is Kelch-like protein diablo.